Consider the following 124-residue polypeptide: MKCFILAAALVLAFACIAASEPAETENEDLDDLSDLEDEEWLDELEEAAEYLESLREFEESRGYKDYMSKAKDLYKDIKKDKRVKAVMKSSYMKEAKKLYKDNPVRDAYQVYKGVKAGGKLLFG.

An N-terminal signal peptide occupies residues 1–19 (MKCFILAAALVLAFACIAA). Residues 20-62 (SEPAETENEDLDDLSDLEDEEWLDELEEAAEYLESLREFEESR) constitute a propeptide that is removed on maturation. Position 123 is a phenylalanine amide (F123).

Belongs to the cationic peptide 06 (cytoinsectotoxin) family. Expressed by the venom gland.

Its subcellular location is the secreted. In terms of biological role, insecticidal and antimicrobial peptide. Has insecticidal activity against larvae of flesh fly S.carnaria. Has antibacterial activity against Gram-positive bacterium B.subtilis B-501 (MIC=2.5 uM) and Gram-negative bacterium E.coli DH5alpha (MIC=10 uM). The sequence is that of Cytoinsectotoxin-4 from Lachesana tarabaevi (Spider).